Consider the following 111-residue polypeptide: Large ribosomal subunit protein uL22 (111 aa).

This sequence belongs to the universal ribosomal protein uL22 family. As to quaternary structure, part of the 50S ribosomal subunit.

Its function is as follows. This protein binds specifically to 23S rRNA; its binding is stimulated by other ribosomal proteins, e.g. L4, L17, and L20. It is important during the early stages of 50S assembly. It makes multiple contacts with different domains of the 23S rRNA in the assembled 50S subunit and ribosome. Functionally, the globular domain of the protein is located near the polypeptide exit tunnel on the outside of the subunit, while an extended beta-hairpin is found that lines the wall of the exit tunnel in the center of the 70S ribosome. The protein is Large ribosomal subunit protein uL22 of Fusobacterium nucleatum subsp. nucleatum (strain ATCC 25586 / DSM 15643 / BCRC 10681 / CIP 101130 / JCM 8532 / KCTC 2640 / LMG 13131 / VPI 4355).